We begin with the raw amino-acid sequence, 1494 residues long: Serine/threonine-protein kinase VPS15 (1494 aa).

Gly2 carries the N-myristoyl glycine lipid modification. One can recognise a Protein kinase domain in the interval Leu27–Leu307. ATP is bound by residues Leu33 to Ser41 and Lys54. Catalysis depends on Asp149, which acts as the Proton acceptor. 7 HEAT repeats span residues Asn383–Ser421, Asp480–Asp517, Lys524–Gly562, Lys610–Gln646, Gln648–Gln685, Ser687–Leu724, and Arg727–Ala764. 2 disordered regions span residues Gln859–Leu903 and Ser1037–Asp1064. Over residues Ser1037–Ser1047 the composition is skewed to low complexity. 7 WD repeats span residues Glu1079–Ser1118, Leu1127–Gly1166, Lys1184–Thr1226, Pro1231–Ser1270, Ile1276–Val1323, Pro1371–Cys1409, and Asp1466–Lys1494.

This sequence belongs to the protein kinase superfamily. Ser/Thr protein kinase family. In terms of assembly, interacts with VPS34. Component of a complex made of VPS38/USL1 and PI3K main subunits such as VPS15, ATG6/VPS30 and VPS34. In terms of processing, autophosphorylated. In terms of tissue distribution, mainly expressed in anthers, pollen grains and pollen tubes, and, to a lower extent, in other tissues and organs including seedlings, roots, stems, leaves, flowers, pitils and siliques.

The protein resides in the cytoplasm. The protein localises to the golgi apparatus. It localises to the trans-Golgi network membrane. Its subcellular location is the endosome membrane. It carries out the reaction L-seryl-[protein] + ATP = O-phospho-L-seryl-[protein] + ADP + H(+). The enzyme catalyses L-threonyl-[protein] + ATP = O-phospho-L-threonyl-[protein] + ADP + H(+). Functionally, serine/threonine-protein kinase required for cytoplasm to vacuole transport (Cvt) and autophagy as a part of the autophagy-specific VPS34 PI3-kinase complex I. Required for pollen development and germination, probably via the modulation of phosphatidylinositol 3-phosphate (PI3P) formation and vacuolar organization. The protein is Serine/threonine-protein kinase VPS15 of Arabidopsis thaliana (Mouse-ear cress).